A 102-amino-acid polypeptide reads, in one-letter code: Flagellar hook-basal body complex protein FliE 1 (102 aa).

It belongs to the FliE family.

It is found in the bacterial flagellum basal body. The polypeptide is Flagellar hook-basal body complex protein FliE 1 (fliE1) (Bradyrhizobium diazoefficiens (strain JCM 10833 / BCRC 13528 / IAM 13628 / NBRC 14792 / USDA 110)).